A 570-amino-acid chain; its full sequence is Ribosome-inactivating protein SNAIf (570 aa).

Positions 1 to 28 (MRVVTKLLYLVVLAICGLGIHGALTHTR) are cleaved as a signal peptide. N40, N62, and N140 each carry an N-linked (GlcNAc...) asparagine glycan. E199 is an active-site residue. The N-linked (GlcNAc...) asparagine glycan is linked to N232. Cystine bridges form between C284–C316, C332–C351, and C373–C385. Ricin B-type lectin domains are found at residues 319–439 (VEVT…WTVG) and 441–566 (VEPL…WITT). One copy of the 1-alpha repeat lies at 329–369 (DGLCVDVRDGHYIDGNTVQLGPCGNECNQLWTFRTDGTIRW). Residues 370 to 405 (LGKCLTTSSSVMIYDCNTVPPEATKWVVSTDGTITN) form a 1-beta repeat. A 1-gamma repeat occupies 408 to 440 (SGLVLTAPQAAEGTALSLENNIHAARQGWTVGD). The 2-alpha repeat unit spans residues 452–489 (KQMCLTENGENNFVWLEDCVLNRVEQEWALYGDGTIRV). A disulfide bridge connects residues C455 and C470. N492 is a glycosylation site (N-linked (GlcNAc...) asparagine). One copy of the 2-beta repeat lies at 493-531 (RSLCVTSEDHEPSDLIVILKCEGSGNQRWVFNTNGTISN). An intrachain disulfide couples C496 to C513. N526 and N544 each carry an N-linked (GlcNAc...) asparagine glycan. A 2-gamma repeat occupies 534–567 (AKLVMDVAQSNVSLRKIILYPPTGNPNQQWITTT).

This sequence belongs to the ribosome-inactivating protein family. Type 2 RIP subfamily. Tetramer of four pairs of disulfide bound A-B chains. The precursor is processed in two chains, A and B, that are linked by a disulfide bond. A small truncated form corresponding roughly to the second ricin B-type lectin domain of the B chain, TrSNAIf, can also be produced. In terms of processing, N-glycosylated. Expressed in fruits.

It catalyses the reaction Endohydrolysis of the N-glycosidic bond at one specific adenosine on the 28S rRNA.. Its function is as follows. Neu5Ac(alpha2-6)Gal/GalNAc specific agglutinin. Behaves as a type-2 ribosome-inactivating protein. Strongly inhibits mammalian but not plant ribosomes. The A chain is responsible for inhibiting protein synthesis through the catalytic inactivation of 60S ribosomal subunits by removing adenine from position 4,324 of 28S rRNA. The B chain binds to cell receptors and probably facilitates the entry into the cell of the A chain; B chains are also responsible for cell agglutination (lectin activity). Involved in plant defense against insects. In terms of biological role, binds Neu5Ac(alpha2-6)Gal/GalNAc but has no clear agglutination activity. The polypeptide is Ribosome-inactivating protein SNAIf (Sambucus nigra (European elder)).